A 271-amino-acid chain; its full sequence is Ribosomal RNA small subunit methyltransferase A (271 aa).

Residues His18, Leu20, Gly45, Glu66, Asp91, and Asn113 each coordinate S-adenosyl-L-methionine.

The protein belongs to the class I-like SAM-binding methyltransferase superfamily. rRNA adenine N(6)-methyltransferase family. RsmA subfamily.

It localises to the cytoplasm. It catalyses the reaction adenosine(1518)/adenosine(1519) in 16S rRNA + 4 S-adenosyl-L-methionine = N(6)-dimethyladenosine(1518)/N(6)-dimethyladenosine(1519) in 16S rRNA + 4 S-adenosyl-L-homocysteine + 4 H(+). Specifically dimethylates two adjacent adenosines (A1518 and A1519) in the loop of a conserved hairpin near the 3'-end of 16S rRNA in the 30S particle. May play a critical role in biogenesis of 30S subunits. This is Ribosomal RNA small subunit methyltransferase A from Baumannia cicadellinicola subsp. Homalodisca coagulata.